We begin with the raw amino-acid sequence, 187 residues long: Threonylcarbamoyl-AMP synthase (187 aa).

The YrdC-like domain maps to 4–187; sequence ILTLDNAVAT…DARSGQILRD (184 aa).

It belongs to the SUA5 family. TsaC subfamily.

Its subcellular location is the cytoplasm. It catalyses the reaction L-threonine + hydrogencarbonate + ATP = L-threonylcarbamoyladenylate + diphosphate + H2O. Functionally, required for the formation of a threonylcarbamoyl group on adenosine at position 37 (t(6)A37) in tRNAs that read codons beginning with adenine. Catalyzes the conversion of L-threonine, HCO(3)(-)/CO(2) and ATP to give threonylcarbamoyl-AMP (TC-AMP) as the acyladenylate intermediate, with the release of diphosphate. The chain is Threonylcarbamoyl-AMP synthase from Xanthomonas oryzae pv. oryzae (strain MAFF 311018).